We begin with the raw amino-acid sequence, 312 residues long: Ribosomal RNA small subunit methyltransferase H (312 aa).

Residues 35–37 (GGH), Asp-55, Asp-101, and Gln-108 contribute to the S-adenosyl-L-methionine site. Positions 285–306 (ALKPSEHEVTENSRSRSSVLRV) are disordered. The span at 287–298 (KPSEHEVTENSR) shows a compositional bias: basic and acidic residues.

Belongs to the methyltransferase superfamily. RsmH family.

It localises to the cytoplasm. It carries out the reaction cytidine(1402) in 16S rRNA + S-adenosyl-L-methionine = N(4)-methylcytidine(1402) in 16S rRNA + S-adenosyl-L-homocysteine + H(+). Its function is as follows. Specifically methylates the N4 position of cytidine in position 1402 (C1402) of 16S rRNA. This chain is Ribosomal RNA small subunit methyltransferase H, found in Aeromonas salmonicida (strain A449).